Reading from the N-terminus, the 261-residue chain is Small ribosomal subunit protein uS2 (261 aa).

The residue at position 2 (Ser2) is an N-acetylserine. Positions 212–261 (QNAAEEAKAEETEEAPAAEAETEWTGETDDVDWADSGATPAAEDAAASNW) are disordered. Positions 222 to 244 (ETEEAPAAEAETEWTGETDDVDW) are enriched in acidic residues.

The protein belongs to the universal ribosomal protein uS2 family. In terms of assembly, component of the small ribosomal subunit. Mature ribosomes consist of a small (40S) and a large (60S) subunit. The 40S subunit contains about 33 different proteins and 1 molecule of RNA (18S). The 60S subunit contains about 49 different proteins and 3 molecules of RNA (25S, 5.8S and 5S). Interacts with RPS21.

It is found in the cytoplasm. Its function is as follows. Required for the assembly and/or stability of the 40S ribosomal subunit. Required for the processing of the 20S rRNA-precursor to mature 18S rRNA in a late step of the maturation of 40S ribosomal subunits. The polypeptide is Small ribosomal subunit protein uS2 (Candida tropicalis (Yeast)).